A 480-amino-acid polypeptide reads, in one-letter code: ATP synthase subunit beta, chloroplastic (480 aa).

Position 161–168 (glycine 161–threonine 168) interacts with ATP.

Belongs to the ATPase alpha/beta chains family. As to quaternary structure, F-type ATPases have 2 components, CF(1) - the catalytic core - and CF(0) - the membrane proton channel. CF(1) has five subunits: alpha(3), beta(3), gamma(1), delta(1), epsilon(1). CF(0) has four main subunits: a(1), b(1), b'(1) and c(9-12).

It localises to the plastid. Its subcellular location is the chloroplast thylakoid membrane. The enzyme catalyses ATP + H2O + 4 H(+)(in) = ADP + phosphate + 5 H(+)(out). In terms of biological role, produces ATP from ADP in the presence of a proton gradient across the membrane. The catalytic sites are hosted primarily by the beta subunits. The protein is ATP synthase subunit beta, chloroplastic of Euglena gracilis.